Reading from the N-terminus, the 87-residue chain is Chromosomal protein MC1b (87 aa).

Protects DNA against thermal denaturation and modulates transcription. The chain is Chromosomal protein MC1b from Methanothrix soehngenii (Methanosaeta concilii).